The chain runs to 361 residues: Peptide chain release factor 1 (361 aa).

Gln-235 bears the N5-methylglutamine mark. A disordered region spans residues 288–307 (AAEAQTRKLQVGSGDRSQRI).

The protein belongs to the prokaryotic/mitochondrial release factor family. In terms of processing, methylated by PrmC. Methylation increases the termination efficiency of RF1.

Its subcellular location is the cytoplasm. Functionally, peptide chain release factor 1 directs the termination of translation in response to the peptide chain termination codons UAG and UAA. The sequence is that of Peptide chain release factor 1 from Xanthomonas axonopodis pv. citri (strain 306).